A 511-amino-acid chain; its full sequence is Pentatricopeptide repeat-containing protein At5g08510 (511 aa).

PPR repeat units lie at residues 46–80 (CTFL…GLRP), 81–115 (SHHT…GFES), 116–146 (DSFC…MSKR), 147–181 (DVPV…NVTS), 182–213 (WTTV…SVKP), 214–248 (NHIT…GFFD), 249–279 (NIYV…LGNQ), 281–315 (NLCS…GEKP), 316–346 (DAVT…MEEV), and 352–382 (KLEH…MPMK). Residues 387-462 (VWGTLLGACS…AAGYSYFVEV (76 aa)) are type E motif. Residues 463 to 494 (GVDVHKFTVEDKSHPRSYEIYQVLEEIFRRMK) form a type E(+) motif region.

This sequence belongs to the PPR family. PCMP-E subfamily.

This chain is Pentatricopeptide repeat-containing protein At5g08510 (PCMP-E20), found in Arabidopsis thaliana (Mouse-ear cress).